Consider the following 177-residue polypeptide: Large ribosomal subunit protein uL6 (177 aa).

The protein belongs to the universal ribosomal protein uL6 family. Part of the 50S ribosomal subunit.

Functionally, this protein binds to the 23S rRNA, and is important in its secondary structure. It is located near the subunit interface in the base of the L7/L12 stalk, and near the tRNA binding site of the peptidyltransferase center. The polypeptide is Large ribosomal subunit protein uL6 (Bartonella henselae (strain ATCC 49882 / DSM 28221 / CCUG 30454 / Houston 1) (Rochalimaea henselae)).